The chain runs to 226 residues: tRNA (guanine-N(7)-)-methyltransferase (226 aa).

The S-adenosyl-L-methionine site is built by glutamate 57, glutamate 82, aspartate 109, and aspartate 132. The active site involves aspartate 132. Substrate is bound by residues lysine 136, aspartate 168, and threonine 205–glutamate 208.

It belongs to the class I-like SAM-binding methyltransferase superfamily. TrmB family.

The catalysed reaction is guanosine(46) in tRNA + S-adenosyl-L-methionine = N(7)-methylguanosine(46) in tRNA + S-adenosyl-L-homocysteine. Its pathway is tRNA modification; N(7)-methylguanine-tRNA biosynthesis. Catalyzes the formation of N(7)-methylguanine at position 46 (m7G46) in tRNA. This is tRNA (guanine-N(7)-)-methyltransferase from Legionella pneumophila subsp. pneumophila (strain Philadelphia 1 / ATCC 33152 / DSM 7513).